The following is a 457-amino-acid chain: Ribosome biogenesis protein YTM1 (457 aa).

The tract at residues 8–89 is ubiquitin-like (UBL) domain; sequence VKVKFFTREK…ETTLTVEYTR (82 aa). The segment at 99 to 457 is sufficient for interaction with ERB1 and association with 66S pre-ribosomes; it reads NFNNDDWVSA…INKGDNIFKN (359 aa). WD repeat units follow at residues 101–140, 142–180, 203–241, 282–322, 324–363, 370–410, and 421–457; these read NNDD…EKQY, GHTG…GSVS, GHKA…MTAI, SHTG…CIDT, TTSY…SAKI, GHKN…PMYT, and GVND…IFKN. The segment at 172–191 is disordered; the sequence is TKNDDGSVSNNTGDENDEEN.

This sequence belongs to the WD repeat WDR12/YTM1 family. In terms of assembly, component of the NOP7 complex, composed of ERB1, NOP7 and YTM1. The complex is held together by ERB1, which interacts with NOP7 via its N-terminal domain and with YTM1 via a high-affinity interaction between the seven-bladed beta-propeller domains of the 2 proteins. The NOP7 complex associates with the 66S pre-ribosome. Interacts (via UBL domain) with MDN1 (via VWFA/MIDAS domain).

The protein localises to the nucleus. It is found in the nucleolus. The protein resides in the nucleoplasm. Functionally, component of the NOP7 complex, which is required for maturation of the 25S and 5.8S ribosomal RNAs and formation of the 60S ribosome. The polypeptide is Ribosome biogenesis protein YTM1 (Candida glabrata (strain ATCC 2001 / BCRC 20586 / JCM 3761 / NBRC 0622 / NRRL Y-65 / CBS 138) (Yeast)).